A 155-amino-acid polypeptide reads, in one-letter code: Histone H2B.5 (155 aa).

Basic and acidic residues-rich tracts occupy residues 1–28 (MAPK…EKAP) and 36–54 (EKRL…GKKD). The interval 1–63 (MAPKAEKKPA…DRAGRKKAKK (63 aa)) is disordered. Residues Lys-7 and Lys-37 each carry the N6-acetyllysine modification. A Glycyl lysine isopeptide (Lys-Gly) (interchain with G-Cter in ubiquitin) cross-link involves residue Lys-151.

This sequence belongs to the histone H2B family. In terms of assembly, the nucleosome is a histone octamer containing two molecules each of H2A, H2B, H3 and H4 assembled in one H3-H4 heterotetramer and two H2A-H2B heterodimers. The octamer wraps approximately 147 bp of DNA. Post-translationally, can be acetylated to form H2BK6ac and H2BK33ac. In terms of processing, monoubiquitinated by BRE1 to form H2BK143ub1 and deubiquitinated by UBP26. Required for heterochromatic histone H3 di- and trimethylation at H3K4me. May give a specific tag for epigenetic transcriptional activation.

It is found in the nucleus. It localises to the chromosome. Core component of nucleosome. Nucleosomes wrap and compact DNA into chromatin, limiting DNA accessibility to the cellular machineries which require DNA as a template. Histones thereby play a central role in transcription regulation, DNA repair, DNA replication and chromosomal stability. DNA accessibility is regulated via a complex set of post-translational modifications of histones, also called histone code, and nucleosome remodeling. The protein is Histone H2B.5 (H2B.5) of Oryza sativa subsp. japonica (Rice).